We begin with the raw amino-acid sequence, 509 residues long: MDIRAAEISAILKDQIKNFGREAEVSEVGQVLSVGDGIARVYGLDNVQAGEMVEFPGGIRGMALNLEADNVGVVIFGADRDIKEGDTVKRTGAIVDVPVGPGLLGRVVDALGNPIDGKGPIKATERKRVDVKAPGIIPRKSVHEPMSTGLKAIDALIPVGRGQRELVIGDRQTGKTAIILDTMLNQKSVHDNGPEKEKLYCVYVAVGQKRSTVAQFVKVLEERGALEYSIIVAATASDPAPMQFLAPFAGCTMGEYFRDNGMHALISYDDLSKQAVAYRQMSLLLRRPPGREAYPGDVFYLHSRLLERAAKLNDDLGNGSLTALPVIETQANDVSAYIPTNVISITDGQIFLETNLFFQGIRPAVNVGLSVSRVGSSAQIKAMKQVAGSIKGELAQYREMAAFAQFGSDLDAATQRLLNRGSRLTELLKQPQFSPLKTEEQVAVIFAGVNGYLDKLPVNQVGKFEHGLLSHMRAAGKDVLDAIRKEKALSDDLRAKLKAEIDAFAKTFA.

An ATP-binding site is contributed by 169–176 (GDRQTGKT).

This sequence belongs to the ATPase alpha/beta chains family. F-type ATPases have 2 components, CF(1) - the catalytic core - and CF(0) - the membrane proton channel. CF(1) has five subunits: alpha(3), beta(3), gamma(1), delta(1), epsilon(1). CF(0) has three main subunits: a(1), b(2) and c(9-12). The alpha and beta chains form an alternating ring which encloses part of the gamma chain. CF(1) is attached to CF(0) by a central stalk formed by the gamma and epsilon chains, while a peripheral stalk is formed by the delta and b chains.

It is found in the cell inner membrane. The enzyme catalyses ATP + H2O + 4 H(+)(in) = ADP + phosphate + 5 H(+)(out). In terms of biological role, produces ATP from ADP in the presence of a proton gradient across the membrane. The alpha chain is a regulatory subunit. This is ATP synthase subunit alpha from Mesorhizobium japonicum (strain LMG 29417 / CECT 9101 / MAFF 303099) (Mesorhizobium loti (strain MAFF 303099)).